The following is a 275-amino-acid chain: Trypsin-3 (275 aa).

An N-terminal signal peptide occupies residues 1–22 (MISNKIAILLAVLVVAVACAQA). Positions 23–48 (RVALKHRSVQALPRFLPRPKYDVGHR) are cleaved as a propeptide — activation peptide. Positions 49 to 274 (IVGGFEIDVS…VRDWVRENSG (226 aa)) constitute a Peptidase S1 domain. Cys-74 and Cys-90 are disulfide-bonded. Residues His-89 and Asp-134 each act as charge relay system in the active site. Disulfide bonds link Cys-199/Cys-215 and Cys-226/Cys-250. Ser-230 functions as the Charge relay system in the catalytic mechanism.

It belongs to the peptidase S1 family. In terms of tissue distribution, expressed in the midgut. Expression levels drop a few hours after blood feeding and pick up again 28 hours later.

The protein localises to the secreted. It catalyses the reaction Preferential cleavage: Arg-|-Xaa, Lys-|-Xaa.. In terms of biological role, constitutive trypsin that is expressed 2 days after emergence, coinciding with host seeking behavior of the female. This is Trypsin-3 (TRYP3) from Anopheles gambiae (African malaria mosquito).